A 974-amino-acid chain; its full sequence is Receptor-like protein 7 (974 aa).

Residues 1 to 24 (MSFLIRSICFLILIPSFLITFVSA) form the signal peptide. The Extracellular segment spans residues 25 to 930 (TQHLCHSDQK…EEEEEESFSW (906 aa)). N54 and N90 each carry an N-linked (GlcNAc...) asparagine glycan. LRR repeat units follow at residues 96–120 (LRHLRDLNLANNNFNNSPIPAEFDK), 122–145 (TGLERLDLSQSSLSGQIPINLLQL), 147–166 (KLVSLDLSSSDFFGDESFHY), 181–204 (LRNLRELDMSYVKISSEIPEEFSN), 206–229 (RSLRSLNLNGCNLFGEFPSSILLI), and 230–252 (PNLQSIDLGNNPNLRGNLPVFHE). N253 carries N-linked (GlcNAc...) asparagine glycosylation. 5 LRR repeats span residues 254-277 (NSLLKLTILYTSFSGAIPDSISSL), 278-301 (KNLTSLTLSVSYFSGKIPFSLGNL), 302-325 (SHLSHLSLSSNNLIGEIPSSIGNL), 327-349 (QLTNFYVGGNKLSGNLPATLSNL), and 350-373 (TKLNTISLSSNQFTGSLPPSISQL). N-linked (GlcNAc...) asparagine glycans are attached at residues N279 and N300. N348 carries an N-linked (GlcNAc...) asparagine glycan. An LRR 12; degenerate repeat occupies 374 to 396 (SKLKFFFADDNPFIGAILSPLLK). LRR repeat units lie at residues 397 to 422 (IPSLTRIHLSYNQLNDLVGIENIFML), 425 to 448 (LETFYIYHYNYTKVRPLDLNVFSS), 454 to 472 (TLYISRIPISTTNITSDFP), 473 to 495 (SNLEYLSLRSCNITDFPEFIRKG), 496 to 519 (RNLQILDLSNNKIKGQVPDWLWRM), 521 to 542 (TLNSVDLSNNSLSGFHVSVKAS), 544 to 570 (ESQLTSVDLSSNAFQGPLFLPSKSLRY), 572 to 589 (SGSNNNFTGKIPRSICGL), 590 to 616 (SSLEILDLSNNNLNGSLPWCLETLMSS), 618 to 638 (SDLDLRNNSLSGSLPEIFMNA), 639 to 662 (TKLRSLDVSHNRMEGKLPGSLTGC), 664 to 685 (SLEVLNVGSNRINDMFPFELNS), 687 to 712 (QKLQVLVLHSNKFHGTLHNVDGVWFG), 713 to 737 (FPQLQIIDVSHNDFFGILPSDYFMN), 785 to 809 (LTIYTAIDLSGNQLHGKIPDSIGLL), 810 to 833 (KELRILNMSSNGFTGHIPSSLANL), 834 to 857 (KNLESLDISQNNISGEIPPELGTL), and 859 to 882 (SLAWINVSHNQLVGSIPQGTQFQR). 3 N-linked (GlcNAc...) asparagine glycosylation sites follow: N434, N466, and N484. N529 carries an N-linked (GlcNAc...) asparagine glycan. 4 N-linked (GlcNAc...) asparagine glycosylation sites follow: N577, N603, N624, and N637. Residue N737 is glycosylated (N-linked (GlcNAc...) asparagine). N-linked (GlcNAc...) asparagine glycans are attached at residues N816, N845, and N864. The tract at residues 899–923 (LENVCGHIKESTPTQTEPLETKEEE) is disordered. The chain crosses the membrane as a helical span at residues 931–951 (IAAGLGFAPGVVFGLAMGYIV). Residues 952–974 (VSYKHQWFMKTFGRSKQQNTRTR) are Cytoplasmic-facing.

Belongs to the RLP family.

Its subcellular location is the cell membrane. This chain is Receptor-like protein 7, found in Arabidopsis thaliana (Mouse-ear cress).